Reading from the N-terminus, the 396-residue chain is MAKGKFERTKPHVNVGTIGHVDHGKTTLTAAITTVLTKKFGGEAKAYDQIDAAPEEKARGITINTAHVEYETANRHYAHVDCPGHADYVKNMITGAAQMDGAILVCSAADGPMPQTREHILLARQVGVPYIIVFLNKCDMVDDAELLELVEMEVRELLSKYDFPGDDTPIVKGSAKLALEGDTGELGEVAIMSLADALDTYIPTPERAVDGAFLMPVEDVFSISGRGTVVTGRVERGIVKVGEEIEIVGIKPTVKTTCTGVEMFRKLLDQGQAGDNVGILLRGTKREDVERGQVLAKPGSITPHTHFTAEVYVLSKDEGGRHTPFFNNYRPQFYFRTTDVTGSIELPKDKEMVMPGDNVSITVKLIAPIAMEEGLRFAIREGGRTVGAGVVAKIIE.

The 197-residue stretch at 10 to 206 folds into the tr-type G domain; the sequence is KPHVNVGTIG…ALDTYIPTPE (197 aa). The interval 19–26 is G1; that stretch reads GHVDHGKT. Residue 19-26 participates in GTP binding; that stretch reads GHVDHGKT. Residue T26 participates in Mg(2+) binding. Positions 60-64 are G2; it reads GITIN. Residues 81-84 are G3; that stretch reads DCPG. Residues 81-85 and 136-139 each bind GTP; these read DCPGH and NKCD. The tract at residues 136-139 is G4; it reads NKCD. A G5 region spans residues 174–176; sequence SAK.

Belongs to the TRAFAC class translation factor GTPase superfamily. Classic translation factor GTPase family. EF-Tu/EF-1A subfamily. As to quaternary structure, monomer.

The protein resides in the cytoplasm. The enzyme catalyses GTP + H2O = GDP + phosphate + H(+). GTP hydrolase that promotes the GTP-dependent binding of aminoacyl-tRNA to the A-site of ribosomes during protein biosynthesis. This is Elongation factor Tu from Burkholderia cenocepacia (strain HI2424).